The primary structure comprises 598 residues: Probable pectinesterase/pectinesterase inhibitor 34 (598 aa).

The disordered stretch occupies residues 1–40; the sequence is MGYERLGPSGATGSVTTSTTTAPILNQVSTSEQPENNNRR. Low complexity predominate over residues 7-23; the sequence is GPSGATGSVTTSTTTAP. A compositionally biased stretch (polar residues) spans 24–36; the sequence is ILNQVSTSEQPEN. A helical transmembrane segment spans residues 46–66; the sequence is VVSSIVLAISLILAAAIFAGV. The pectinesterase inhibitor 34 stretch occupies residues 81–232; it reads RKPSQAISKA…SELVSNCLAI (152 aa). The pectinesterase 34 stretch occupies residues 284-582; sequence DIIVSKDGNG…FTVAEFIYGS (299 aa). Substrate is bound by residues T360 and Q390. The active-site Proton donor; for pectinesterase activity is D413. C427 and C447 are oxidised to a cystine. The active-site Nucleophile; for pectinesterase activity is the D434. Substrate is bound by residues R502 and W504.

It in the N-terminal section; belongs to the PMEI family. In the C-terminal section; belongs to the pectinesterase family. In terms of tissue distribution, expressed in siliques.

It localises to the membrane. It catalyses the reaction [(1-&gt;4)-alpha-D-galacturonosyl methyl ester](n) + n H2O = [(1-&gt;4)-alpha-D-galacturonosyl](n) + n methanol + n H(+). Its pathway is glycan metabolism; pectin degradation; 2-dehydro-3-deoxy-D-gluconate from pectin: step 1/5. Acts in the modification of cell walls via demethylesterification of cell wall pectin. The protein is Probable pectinesterase/pectinesterase inhibitor 34 (PME34) of Arabidopsis thaliana (Mouse-ear cress).